A 346-amino-acid polypeptide reads, in one-letter code: MGVTELGKLIGKEARREVKLEALAGRCVALDAYNALYQFLASIRQPDGTPLMDRAGRITSHISGLFYRTINLMEAGIKPVYVFDGKPPEFKLAEIEERRKAKEKATEELVRAIKEGRRDEVAKYAKRAIFLTNEMVEDAKKLLTYMGVPWVQAPSEGEAQAAYMARRGHCWAVGSQDYDSLLFGSPRLVRNLATSPKRKVGDEVVELSPEIIELDAVLKSLRLRSREQLIDLAILLGTDYNPDGVPGIGPQRALKLIWEFGSLEKLLDTVLRGVTFPIDPVEIKRFFLNPPVTDTYTTDVTKPDDAKLRDFLVHEHDFGEERVERALERLKKAMGKLRTSALDSFF.

Positions 1–102 (MGVTELGKLI…AEIEERRKAK (102 aa)) are N-domain. Residues Asp-31, Asp-84, Glu-156, Glu-158, Asp-177, Asp-179, and Asp-239 each contribute to the Mg(2+) site. Residues 120 to 261 (EVAKYAKRAI…RALKLIWEFG (142 aa)) are I-domain.

Belongs to the XPG/RAD2 endonuclease family. FEN1 subfamily. Interacts with PCNA. PCNA stimulates the nuclease activity without altering cleavage specificity. It depends on Mg(2+) as a cofactor.

Its function is as follows. Structure-specific nuclease with 5'-flap endonuclease and 5'-3' exonuclease activities involved in DNA replication and repair. During DNA replication, cleaves the 5'-overhanging flap structure that is generated by displacement synthesis when DNA polymerase encounters the 5'-end of a downstream Okazaki fragment. Binds the unpaired 3'-DNA end and kinks the DNA to facilitate 5' cleavage specificity. Cleaves one nucleotide into the double-stranded DNA from the junction in flap DNA, leaving a nick for ligation. Also involved in the base excision repair (BER) pathway. Acts as a genome stabilization factor that prevents flaps from equilibrating into structures that lead to duplications and deletions. Also possesses 5'-3' exonuclease activity on nicked or gapped double-stranded DNA. This chain is Flap endonuclease 1, found in Pyrobaculum arsenaticum (strain DSM 13514 / JCM 11321 / PZ6).